We begin with the raw amino-acid sequence, 146 residues long: Hemoglobin subunit beta-2 (146 aa).

One can recognise a Globin domain in the interval 2–146 (EWTNFERATI…VVSSLGKQYH (145 aa)). Residues H63 and H92 each contribute to the heme b site.

This sequence belongs to the globin family. As to quaternary structure, hb2 is a heterotetramer of two alpha chains and two beta-2 chains. As to expression, red blood cells.

Involved in oxygen transport from gills to the various peripheral tissues. This is Hemoglobin subunit beta-2 (hbb2) from Cygnodraco mawsoni (Antarctic dragonfish).